Consider the following 130-residue polypeptide: Transcription antitermination protein NusB (130 aa).

Belongs to the NusB family.

In terms of biological role, involved in transcription antitermination. Required for transcription of ribosomal RNA (rRNA) genes. Binds specifically to the boxA antiterminator sequence of the ribosomal RNA (rrn) operons. This chain is Transcription antitermination protein NusB, found in Bacillus velezensis (strain DSM 23117 / BGSC 10A6 / LMG 26770 / FZB42) (Bacillus amyloliquefaciens subsp. plantarum).